The chain runs to 193 residues: Interleukin-18 (193 aa).

Positions 1–36 (MAAEQVEDYCISFVEMKFINNTLYFVAENDEDLESD) are excised as a propeptide.

It belongs to the IL-1 family. As to quaternary structure, forms a ternary complex with ligand-binding receptor subunit IL18R1 and signaling receptor subunit IL18RAP at the plasma membrane. Mature IL18 first binds to IL18R1 forming a low affinity binary complex, which then interacts with IL18RAP to form a high affinity ternary complex that signals inside the cell. Interacts with cargo receptor TMED10; the interaction mediates the translocation from the cytoplasm into the ERGIC (endoplasmic reticulum-Golgi intermediate compartment) and thereby secretion. The pro-IL-18 precursor is processed by CASP1, CASP4 or CASP5 to yield its mature, active form. The pro-IL-18 precursor features autoinhibitory interactions between the propeptide and the post-cleavage-site region, preventing recognition by the IL18R1 receptor. Processing by CASP1, CASP4 or CASP5 induces conformational changes to generate critical receptor-binding sites. The mature form is then secreted and released in the extracellular milieu by passing through the gasdermin-D (GSDMD) pore. In contrast, cleavage by CASP3 inactivates IL18.

It is found in the cytoplasm. The protein localises to the cytosol. It localises to the secreted. In terms of biological role, pro-inflammatory cytokine primarily involved in epithelial barrier repair, polarized T-helper 1 (Th1) cell and natural killer (NK) cell immune responses. Upon binding to IL18R1 and IL18RAP, forms a signaling ternary complex which activates NF-kappa-B, triggering synthesis of inflammatory mediators. Synergizes with IL12/interleukin-12 to induce IFNG synthesis from T-helper 1 (Th1) cells and natural killer (NK) cells. Involved in transduction of inflammation downstream of pyroptosis: its mature form is specifically released in the extracellular milieu by passing through the gasdermin-D (GSDMD) pore. The protein is Interleukin-18 (IL18) of Bos taurus (Bovine).